A 291-amino-acid chain; its full sequence is Meiosis-specific protein SPO13 (291 aa).

3 disordered regions span residues 1 to 30 (MAPR…QEKT), 116 to 143 (SFDN…QSSQ), and 271 to 291 (CSDY…SSLN). Positions 3–6 (PRKR) match the Nuclear localization signal motif. The span at 116 to 125 (SFDNSLRFED) shows a compositional bias: basic and acidic residues. Residues 130-143 (PKSTSTPVLSQSSQ) are compositionally biased toward polar residues.

Its subcellular location is the nucleus. Its function is as follows. Required for meiosis I segmentation. Probably acts as a regulator of kinetochore function during meiosis I: required both for mono-orientation of kinetochores on sister chromosomes and protection of centromeric cohesin from separase-mediated cleavage. The chain is Meiosis-specific protein SPO13 (SPO13) from Saccharomyces cerevisiae (strain ATCC 204508 / S288c) (Baker's yeast).